The primary structure comprises 98 residues: Large ribosomal subunit protein bL28 (98 aa).

It belongs to the bacterial ribosomal protein bL28 family.

This Beijerinckia indica subsp. indica (strain ATCC 9039 / DSM 1715 / NCIMB 8712) protein is Large ribosomal subunit protein bL28.